Consider the following 79-residue polypeptide: Serine rich endogenous peptide 2 (79 aa).

An N-terminal signal peptide occupies residues Met1–Cys19. The segment at Cys25–Asn79 is disordered. An SCOOP motif motif is present at residues Pro45–Phe57. The span at Pro45–Pro59 shows a compositional bias: low complexity. The SxS motif essential for MIK2 binding signature appears at Ser49–Ser51. Over residues Lys60–Asn79 the composition is skewed to pro residues.

Belongs to the serine rich endogenous peptide (SCOOP) phytocytokine family. Interacts with MIK2 (via extracellular leucine-rich repeat domain); this interaction triggers the formation of complex between MIK2 and the BAK1/SERK3 and SERK4 coreceptors, and subsequent BAK1 activation by phosphorylation.

The protein resides in the cell membrane. It is found in the secreted. It localises to the extracellular space. Its subcellular location is the apoplast. Its function is as follows. Brassicaceae-specific phytocytokine (plant endogenous peptide released into the apoplast) perceived by MIK2 in a BAK1/SERK3 and SERK4 coreceptors-dependent manner, that modulates various physiological and antimicrobial processes including growth prevention and reactive oxygen species (ROS) response regulation. In Arabidopsis thaliana (Mouse-ear cress), this protein is Serine rich endogenous peptide 2.